The following is a 139-amino-acid chain: Small ribosomal subunit protein uS12 (139 aa).

3-methylthioaspartic acid is present on Asp-102.

This sequence belongs to the universal ribosomal protein uS12 family. In terms of assembly, part of the 30S ribosomal subunit. Contacts proteins S8 and S17. May interact with IF1 in the 30S initiation complex.

With S4 and S5 plays an important role in translational accuracy. Its function is as follows. Interacts with and stabilizes bases of the 16S rRNA that are involved in tRNA selection in the A site and with the mRNA backbone. Located at the interface of the 30S and 50S subunits, it traverses the body of the 30S subunit contacting proteins on the other side and probably holding the rRNA structure together. The combined cluster of proteins S8, S12 and S17 appears to hold together the shoulder and platform of the 30S subunit. This is Small ribosomal subunit protein uS12 from Phytoplasma australiense.